We begin with the raw amino-acid sequence, 215 residues long: Large ribosomal subunit protein uL16 (215 aa).

This sequence belongs to the universal ribosomal protein uL16 family. In terms of assembly, component of the large ribosomal subunit.

It localises to the cytoplasm. Its function is as follows. Component of the large ribosomal subunit. Plays a role in the formation of actively translating ribosomes. Plays a role in the embryonic brain development. The polypeptide is Large ribosomal subunit protein uL16 (Danio rerio (Zebrafish)).